A 403-amino-acid chain; its full sequence is MSEKGRLFTSESVTEGHPDKICDAVSDSVLDALLAADPRSRVAVETLVTTGQVHVVGEVTTTAKEAFADITNIVRERILDIGYDSSDKGFDGASCGVNIGIGAQSPDIAQGVDTAHEARVEGAADPLDAQGAGDQGLMFGYAINDTPELMPLPIALAHRLSRRLTEVRKNGVLPYLRPDGKTQVTIAYEDRVPVRLDTVVISTQHADDIDLVKTLDPDIREQVLKTVLDDLAHDTLDASAVRVLVNPTGKFVLGGPMGDAGLTGRKIIVDTYGGWARHGGGAFSGKDPSKVDRSAAYAMRWVAKNVVAAGLAEGVEVQVAYAIGKAAPVGLFVETFGSEAVDPVKIEKAIGEVFDLRPGAIIRDLNLLRPIYAPTAAYGHFGRTDVDLPWERLDKVDDLKRAI.

His17 serves as a coordination point for ATP. Asp19 lines the Mg(2+) pocket. Residue Glu45 participates in K(+) binding. Glu58 and Gln104 together coordinate L-methionine. The tract at residues 104–114 (QSPDIAQGVDT) is flexible loop. Residues 179 to 181 (DGK), 250 to 251 (KF), Asp259, 265 to 266 (RK), Ala282, and Lys286 contribute to the ATP site. Residue Asp259 participates in L-methionine binding. An L-methionine-binding site is contributed by Lys290.

It belongs to the AdoMet synthase family. Homotetramer; dimer of dimers. Mg(2+) is required as a cofactor. Requires K(+) as cofactor.

It is found in the cytoplasm. The catalysed reaction is L-methionine + ATP + H2O = S-adenosyl-L-methionine + phosphate + diphosphate. It functions in the pathway amino-acid biosynthesis; S-adenosyl-L-methionine biosynthesis; S-adenosyl-L-methionine from L-methionine: step 1/1. Functionally, catalyzes the formation of S-adenosylmethionine (AdoMet) from methionine and ATP. The overall synthetic reaction is composed of two sequential steps, AdoMet formation and the subsequent tripolyphosphate hydrolysis which occurs prior to release of AdoMet from the enzyme. In Mycobacterium ulcerans (strain Agy99), this protein is S-adenosylmethionine synthase.